Reading from the N-terminus, the 158-residue chain is Crossover junction endodeoxyribonuclease RuvC (158 aa).

Residues aspartate 7, glutamate 66, and aspartate 139 contribute to the active site. Mg(2+)-binding residues include aspartate 7, glutamate 66, and aspartate 139.

This sequence belongs to the RuvC family. As to quaternary structure, homodimer which binds Holliday junction (HJ) DNA. The HJ becomes 2-fold symmetrical on binding to RuvC with unstacked arms; it has a different conformation from HJ DNA in complex with RuvA. In the full resolvosome a probable DNA-RuvA(4)-RuvB(12)-RuvC(2) complex forms which resolves the HJ. Requires Mg(2+) as cofactor.

The protein localises to the cytoplasm. The catalysed reaction is Endonucleolytic cleavage at a junction such as a reciprocal single-stranded crossover between two homologous DNA duplexes (Holliday junction).. Functionally, the RuvA-RuvB-RuvC complex processes Holliday junction (HJ) DNA during genetic recombination and DNA repair. Endonuclease that resolves HJ intermediates. Cleaves cruciform DNA by making single-stranded nicks across the HJ at symmetrical positions within the homologous arms, yielding a 5'-phosphate and a 3'-hydroxyl group; requires a central core of homology in the junction. The consensus cleavage sequence is 5'-(A/T)TT(C/G)-3'. Cleavage occurs on the 3'-side of the TT dinucleotide at the point of strand exchange. HJ branch migration catalyzed by RuvA-RuvB allows RuvC to scan DNA until it finds its consensus sequence, where it cleaves and resolves the cruciform DNA. In Carboxydothermus hydrogenoformans (strain ATCC BAA-161 / DSM 6008 / Z-2901), this protein is Crossover junction endodeoxyribonuclease RuvC.